A 410-amino-acid polypeptide reads, in one-letter code: S-adenosylmethionine synthase (410 aa).

Residue H15 participates in ATP binding. D17 lines the Mg(2+) pocket. Position 43 (E43) interacts with K(+). E56 and Q100 together coordinate L-methionine. The tract at residues 100-110 (QSPDIAKGVDT) is flexible loop. Residues 171 to 173 (DGK), 248 to 249 (KF), D257, 263 to 264 (RK), A280, and K284 each bind ATP. Residue D257 coordinates L-methionine. An L-methionine-binding site is contributed by K288.

It belongs to the AdoMet synthase family. Homotetramer; dimer of dimers. Mg(2+) serves as cofactor. Requires K(+) as cofactor.

Its subcellular location is the cytoplasm. It carries out the reaction L-methionine + ATP + H2O = S-adenosyl-L-methionine + phosphate + diphosphate. Its pathway is amino-acid biosynthesis; S-adenosyl-L-methionine biosynthesis; S-adenosyl-L-methionine from L-methionine: step 1/1. Functionally, catalyzes the formation of S-adenosylmethionine (AdoMet) from methionine and ATP. The overall synthetic reaction is composed of two sequential steps, AdoMet formation and the subsequent tripolyphosphate hydrolysis which occurs prior to release of AdoMet from the enzyme. The chain is S-adenosylmethionine synthase from Prochlorococcus marinus (strain MIT 9211).